Consider the following 93-residue polypeptide: UPF0147 protein PH1921.2 (93 aa).

Belongs to the UPF0147 family.

The protein is UPF0147 protein PH1921.2 of Pyrococcus horikoshii (strain ATCC 700860 / DSM 12428 / JCM 9974 / NBRC 100139 / OT-3).